The sequence spans 447 residues: Trichothecene C-3 esterase (447 aa).

The N-terminal stretch at 1 to 22 (MALNRLVFSLSLWLGFIGAAQA) is a signal peptide. N-linked (GlcNAc...) asparagine glycans are attached at residues asparagine 59, asparagine 66, asparagine 136, and asparagine 189. Serine 202 serves as the catalytic Charge relay system. 3 N-linked (GlcNAc...) asparagine glycosylation sites follow: asparagine 238, asparagine 284, and asparagine 314. Residues aspartate 352 and histidine 384 each act as charge relay system in the active site. 2 N-linked (GlcNAc...) asparagine glycosylation sites follow: asparagine 389 and asparagine 423.

Belongs to the AB hydrolase superfamily. Lipase family.

Its pathway is sesquiterpene biosynthesis; trichothecene biosynthesis. Its function is as follows. Trichothecene C-3 esterase; part of the core gene cluster that mediates the biosynthesis of trichothecenes, a very large family of chemically related bicyclic sesquiterpene compounds acting as mycotoxins, including T2-toxin. The biosynthesis of trichothecenes begins with the cyclization of farnesyl diphosphate to trichodiene and is catalyzed by the trichodiene synthase TRI5. Trichodiene undergoes a series of oxygenations catalyzed by the cytochrome P450 monooxygenase TRI4. TRI4 controls the addition of four oxygens at C-2, C-3, C-11, and the C-12, C-13-epoxide to form the intermediate isotrichotriol. Isotrichotriol then undergoes a non-enzymatic isomerization and cyclization to form isotrichodermol. During this process, the oxygen at the C-2 position becomes the pyran ring oxygen and the hydroxyl group at C-11 is lost. More complex type A trichothecenes are built by modifying isotrichodermol through a series of paired hydroxylation and acetylation or acylation steps. Isotrichodermol is converted to isotrichodermin by the acetyltransferase TRI101. TRI101 encodes a C-3 transacetylase that acts as a self-protection or resistance factor during biosynthesis and that the presence of a free C-3 hydroxyl group is a key component of Fusarium trichothecene phytotoxicity. A second hydroxyl group is added to C-15 by the trichothecene C-15 hydroxylase TRI11, producing 15-decalonectrin, which is then acetylated by TRI3, producing calonectrin. A third hydroxyl group is added at C-4 by the cytochrome P450 monooxygenase TRI13, converting calonectrin to 3,15-diacetoxyspirpenol, which is subsequently acetylated by the acetyltransferase TRI7. A fourth hydroxyl group is added to C-8 by the cytochrome P450 monooxygenase TRI1, followed by the addition of an isovaleryl moiety by TRI16. Finally, the acetyl group is removed from the C-3 position by the trichothecene C-3 esterase TRI8 to produce T-2 toxin. This is Trichothecene C-3 esterase from Fusarium sporotrichioides.